The primary structure comprises 529 residues: Phosphoenolpyruvate carboxykinase (ATP) (529 aa).

The substrate site is built by Arg60, Tyr195, and Lys201. ATP-binding positions include Lys201, His220, and 236 to 244 (GLSGTGKTT). Positions 201 and 220 each coordinate Mn(2+). Asp257 is a binding site for Mn(2+). Residues Glu285, Arg323, and Ser448 each coordinate ATP. Arg323 contacts substrate.

This sequence belongs to the phosphoenolpyruvate carboxykinase (ATP) family. The cofactor is Mn(2+).

It localises to the cytoplasm. It carries out the reaction oxaloacetate + ATP = phosphoenolpyruvate + ADP + CO2. It participates in carbohydrate biosynthesis; gluconeogenesis. In terms of biological role, involved in the gluconeogenesis. Catalyzes the conversion of oxaloacetate (OAA) to phosphoenolpyruvate (PEP) through direct phosphoryl transfer between the nucleoside triphosphate and OAA. This Geobacter sp. (strain M21) protein is Phosphoenolpyruvate carboxykinase (ATP).